The sequence spans 513 residues: Histidine ammonia-lyase (513 aa).

The 5-imidazolinone (Ala-Gly) cross-link spans 142–144 (ASG). A 2,3-didehydroalanine (Ser) modification is found at Ser-143.

This sequence belongs to the PAL/histidase family. Post-translationally, contains an active site 4-methylidene-imidazol-5-one (MIO), which is formed autocatalytically by cyclization and dehydration of residues Ala-Ser-Gly.

It is found in the cytoplasm. It catalyses the reaction L-histidine = trans-urocanate + NH4(+). Its pathway is amino-acid degradation; L-histidine degradation into L-glutamate; N-formimidoyl-L-glutamate from L-histidine: step 1/3. This is Histidine ammonia-lyase from Roseobacter denitrificans (strain ATCC 33942 / OCh 114) (Erythrobacter sp. (strain OCh 114)).